A 49-amino-acid polypeptide reads, in one-letter code: Large ribosomal subunit protein bL33B (49 aa).

This sequence belongs to the bacterial ribosomal protein bL33 family.

In Staphylococcus epidermidis (strain ATCC 12228 / FDA PCI 1200), this protein is Large ribosomal subunit protein bL33B (rpmG2).